Here is a 326-residue protein sequence, read N- to C-terminus: Aldo-keto reductase family 1 member D1 (326 aa).

NADP(+) is bound by residues 22-26 (GLGTY) and D52. Y26 contacts substrate. 4 residues coordinate substrate: Y57, W88, E119, and Y131. Y57 (proton donor) is an active-site residue. NADP(+) is bound by residues 168–169 (SN), Q192, and 219–224 (YSPLGT). Residue W230 participates in substrate binding. Position 273-283 (273-283 (KSTTPERIKEN)) interacts with NADP(+).

It belongs to the aldo/keto reductase family. The N-terminus is blocked.

It localises to the cytoplasm. It catalyses the reaction 5beta-cholestan-3-one + NADP(+) = cholest-4-en-3-one + NADPH + H(+). The catalysed reaction is 4,5beta-dihydrocortisone + NADP(+) = cortisone + NADPH + H(+). It carries out the reaction cortisol + NADPH + H(+) = 5beta-dihydrocortisol + NADP(+). The enzyme catalyses corticosterone + NADPH + H(+) = 5beta-dihydrocorticosterone + NADP(+). It catalyses the reaction 7alpha,12alpha-dihydroxycholest-4-en-3-one + NADPH + H(+) = 7alpha,12alpha-dihydroxy-5beta-cholestan-3-one + NADP(+). The catalysed reaction is 7alpha-hydroxycholest-4-en-3-one + NADPH + H(+) = 7alpha-hydroxy-5beta-cholestan-3-one + NADP(+). It carries out the reaction epitestosterone + NADPH + H(+) = 5beta-dihydroepitestosterone + NADP(+). The enzyme catalyses androst-4-ene-3,17-dione + NADPH + H(+) = 5beta-androstane-3,17-dione + NADP(+). It catalyses the reaction progesterone + NADPH + H(+) = 5beta-pregnan-3,20-dione + NADP(+). The catalysed reaction is 21-hydroxyprogesterone + NADPH + H(+) = 5beta-dihydrodeoxycorticosterone + NADP(+). It carries out the reaction aldosterone + NADPH + H(+) = 5beta-dihydroaldosterone + NADP(+). The enzyme catalyses 17beta-hydroxyandrosta-1,4-dien-3-one + NADPH + H(+) = 17beta-hydroxy-5beta-androst-1-en-3-one + NADP(+). It catalyses the reaction 17beta-hydroxyestr-4-en-3-one + NADPH + H(+) = 17beta-hydroxy-5beta-estran-3-one + NADP(+). The catalysed reaction is 5beta-dihydrotestosterone + NADP(+) = testosterone + NADPH + H(+). It carries out the reaction androst-4-ene-3,11,17-trione + NADPH + H(+) = 17beta-hydroxyandrost-4-ene-3,11-dione + NADP(+). Its activity is regulated as follows. Subject to inhibition by high substrate concentrations. Inhibited by testosterone concentrations above 10 uM. Inhibited by the primary and secondary bile acids chenodeoxycholic acid and ursodeoxycholic acid. Its function is as follows. Catalyzes the stereospecific NADPH-dependent reduction of the C4-C5 double bond of bile acid intermediates and steroid hormones carrying a delta(4)-3-one structure to yield an A/B cis-ring junction. This cis-configuration is crucial for bile acid biosynthesis and plays important roles in steroid metabolism. Capable of reducing a broad range of delta-(4)-3-ketosteroids from C18 (such as, 17beta-hydroxyestr-4-en-3-one) to C27 (such as, 7alpha-hydroxycholest-4-en-3-one). The sequence is that of Aldo-keto reductase family 1 member D1 (Akr1d1) from Rattus norvegicus (Rat).